Reading from the N-terminus, the 689-residue chain is Protein asunder (689 aa).

Residues asparagine 521–threonine 550 are a coiled coil. Disordered stretches follow at residues proline 592–arginine 619 and glycine 665–serine 689. Positions serine 599–lysine 614 are enriched in low complexity. The Nuclear localization signal (NLS) motif lies at leucine 613 to arginine 619.

Belongs to the Integrator subunit 13 family. As to quaternary structure, belongs to the multiprotein complex Integrator, at least composed of IntS1, IntS2, IntS3, IntS4, omd/IntS5, IntS6, defl/IntS7, IntS8, IntS9, IntS10, IntS11, IntS12, asun/IntS13, IntS14 and IntS15. The core complex associates with protein phosphatase 2A subunits mts/PP2A and Pp2A-29B, to form the Integrator-PP2A (INTAC) complex. In terms of processing, phosphorylated. As to expression, expressed in nurse cells at stages 9-10 of oogenesis and exported to the oocyte. Also expressed in the follicle cells surrounding the oocyte.

It localises to the nucleus. The protein resides in the cytoplasm. It is found in the perinuclear region. In terms of biological role, component of the integrator complex, a multiprotein complex that terminates RNA polymerase II (Pol II) transcription in the promoter-proximal region of genes. The integrator complex provides a quality checkpoint during transcription elongation by driving premature transcription termination of transcripts that are unfavorably configured for transcriptional elongation: the complex terminates transcription by (1) catalyzing dephosphorylation of the C-terminal domain (CTD) of Pol II subunit Polr2A/Rbp1 and Spt5, and (2) degrading the exiting nascent RNA transcript via endonuclease activity. The integrator complex is also involved in the 3'-end processing of the U7 snRNA, and also the spliceosomal snRNAs U1, U2, U4 and U5. Plays a role as a regulator of spermatogenesis. Crucial regulator of the mitotic cell cycle and development. Required for the correct dynein-dynactin perinuclear localization important for nucleus-centrosome coupling that occur upon meiotic progression of primary spermatocytes. Plays a role in sperm motility and fertility. May have a role in the PNG/PLU/GNU pathway. The sequence is that of Protein asunder from Drosophila melanogaster (Fruit fly).